The following is a 710-amino-acid chain: NAD(P)H-quinone oxidoreductase subunit 5, chloroplastic (710 aa).

A run of 17 helical transmembrane segments spans residues 9 to 29, 40 to 60, 89 to 109, 125 to 145, 147 to 167, 185 to 205, 221 to 241, 258 to 278, 280 to 300, 327 to 347, 354 to 374, 396 to 416, 425 to 445, 519 to 539, 571 to 591, 657 to 676, and 689 to 709; these read WIIPFVPLLVPMLIGAGLLIF, WSFQSVLLLSIVMAFSIYLSI, IDPLTSIMSILVTTVGILVLI, FTYMSFFCAAMLGLVTSSNFI, IYIFWELVGLCSYLLIGFWFT, GDFGLLLGILGFYWITGSFEF, VNLLFVTLCAALLFVGAIAKS, TPISALIHAATLVAAGIFLVA, LLPLFLVIPYIMYFISLIGII, LGYMMVALGMGSYRSALFHLI, ALLFLAAGSVIHSMETIIGYS, GAFLLGTLSLCGIPPLACFWS, WLYSPIFALIAWGTVGLTAFY, MLFPQILLCFVTFVIGFLGIP, FLKHTVISGGIAYCGIFIAFL, SFDLRIIDQIFNCFAFLSFI, and IPFYLFFYFFFVSIFIFLFYK.

It belongs to the complex I subunit 5 family. In terms of assembly, NDH is composed of at least 16 different subunits, 5 of which are encoded in the nucleus.

It localises to the plastid. The protein localises to the chloroplast thylakoid membrane. It catalyses the reaction a plastoquinone + NADH + (n+1) H(+)(in) = a plastoquinol + NAD(+) + n H(+)(out). It carries out the reaction a plastoquinone + NADPH + (n+1) H(+)(in) = a plastoquinol + NADP(+) + n H(+)(out). Its function is as follows. NDH shuttles electrons from NAD(P)H:plastoquinone, via FMN and iron-sulfur (Fe-S) centers, to quinones in the photosynthetic chain and possibly in a chloroplast respiratory chain. The immediate electron acceptor for the enzyme in this species is believed to be plastoquinone. Couples the redox reaction to proton translocation, and thus conserves the redox energy in a proton gradient. The sequence is that of NAD(P)H-quinone oxidoreductase subunit 5, chloroplastic (ndhF) from Ipomoea purpurea (Common morning glory).